The chain runs to 119 residues: Large ribosomal subunit protein uL18 (119 aa).

The protein belongs to the universal ribosomal protein uL18 family. In terms of assembly, part of the 50S ribosomal subunit; part of the 5S rRNA/L5/L18/L25 subcomplex. Contacts the 5S and 23S rRNAs.

This is one of the proteins that bind and probably mediate the attachment of the 5S RNA into the large ribosomal subunit, where it forms part of the central protuberance. The protein is Large ribosomal subunit protein uL18 of Dinoroseobacter shibae (strain DSM 16493 / NCIMB 14021 / DFL 12).